A 195-amino-acid polypeptide reads, in one-letter code: Shikimate kinase (195 aa).

Residue 33 to 38 (GAGKTT) coordinates ATP. A Mg(2+)-binding site is contributed by Thr-37. The substrate site is built by Asp-55, Arg-79, and Gly-101. Arg-139 contacts ATP. Arg-158 lines the substrate pocket. Arg-175 contacts ATP.

The protein belongs to the shikimate kinase family. Monomer. Mg(2+) serves as cofactor.

Its subcellular location is the cytoplasm. It catalyses the reaction shikimate + ATP = 3-phosphoshikimate + ADP + H(+). The protein operates within metabolic intermediate biosynthesis; chorismate biosynthesis; chorismate from D-erythrose 4-phosphate and phosphoenolpyruvate: step 5/7. In terms of biological role, catalyzes the specific phosphorylation of the 3-hydroxyl group of shikimic acid using ATP as a cosubstrate. The polypeptide is Shikimate kinase (Nitrosospira multiformis (strain ATCC 25196 / NCIMB 11849 / C 71)).